The primary structure comprises 294 residues: 4-hydroxy-tetrahydrodipicolinate synthase (294 aa).

T44 lines the pyruvate pocket. The Proton donor/acceptor role is filled by Y132. The Schiff-base intermediate with substrate role is filled by K161. Pyruvate is bound at residue I206.

The protein belongs to the DapA family. As to quaternary structure, homotetramer; dimer of dimers.

It localises to the cytoplasm. The enzyme catalyses L-aspartate 4-semialdehyde + pyruvate = (2S,4S)-4-hydroxy-2,3,4,5-tetrahydrodipicolinate + H2O + H(+). It functions in the pathway amino-acid biosynthesis; L-lysine biosynthesis via DAP pathway; (S)-tetrahydrodipicolinate from L-aspartate: step 3/4. Is not inhibited by (S)-lysine, in contrast to E.coli DapA. In terms of biological role, catalyzes the condensation of (S)-aspartate-beta-semialdehyde [(S)-ASA] and pyruvate to 4-hydroxy-tetrahydrodipicolinate (HTPA). The protein is 4-hydroxy-tetrahydrodipicolinate synthase of Thermotoga maritima (strain ATCC 43589 / DSM 3109 / JCM 10099 / NBRC 100826 / MSB8).